A 381-amino-acid polypeptide reads, in one-letter code: Flap endonuclease 1 (381 aa).

The segment at 1 to 105 (MGIKGLNSII…HELDKRTSRR (105 aa)) is N-domain. Asp-34 serves as a coordination point for Mg(2+). The DNA site is built by Arg-47 and Arg-71. Mg(2+)-binding residues include Asp-87, Glu-156, Glu-158, Asp-177, and Asp-179. Positions 120 to 251 (EKMKHERRLV…VTALKLMKEH (132 aa)) are I-domain. Glu-156 contributes to the DNA binding site. DNA-binding residues include Gly-229 and Asp-231. Asp-231 provides a ligand contact to Mg(2+). The interval 338–346 (VQGRLDGFF) is interaction with PCNA.

Belongs to the XPG/RAD2 endonuclease family. FEN1 subfamily. In terms of assembly, interacts with PCNA. Three molecules of FEN1 bind to one PCNA trimer with each molecule binding to one PCNA monomer. PCNA stimulates the nuclease activity without altering cleavage specificity. Mg(2+) is required as a cofactor. In terms of processing, phosphorylated. Phosphorylation upon DNA damage induces relocalization to the nuclear plasma.

Its subcellular location is the nucleus. The protein localises to the nucleolus. It is found in the nucleoplasm. The protein resides in the mitochondrion. In terms of biological role, structure-specific nuclease with 5'-flap endonuclease and 5'-3' exonuclease activities involved in DNA replication and repair. During DNA replication, cleaves the 5'-overhanging flap structure that is generated by displacement synthesis when DNA polymerase encounters the 5'-end of a downstream Okazaki fragment. It enters the flap from the 5'-end and then tracks to cleave the flap base, leaving a nick for ligation. Also involved in the long patch base excision repair (LP-BER) pathway, by cleaving within the apurinic/apyrimidinic (AP) site-terminated flap. Acts as a genome stabilization factor that prevents flaps from equilibrating into structures that lead to duplications and deletions. Also possesses 5'-3' exonuclease activity on nicked or gapped double-stranded DNA, and exhibits RNase H activity. Also involved in replication and repair of rDNA and in repairing mitochondrial DNA. In Candida glabrata (strain ATCC 2001 / BCRC 20586 / JCM 3761 / NBRC 0622 / NRRL Y-65 / CBS 138) (Yeast), this protein is Flap endonuclease 1.